Consider the following 308-residue polypeptide: Isoflavone reductase homolog (308 aa).

NADP(+) is bound by residues G11–G17, R36, and K45. The active-site Proton acceptor is the K133. R137 is a binding site for NADP(+).

The protein belongs to the NmrA-type oxidoreductase family. Isoflavone reductase subfamily.

It localises to the cytoplasm. In Solanum tuberosum (Potato), this protein is Isoflavone reductase homolog.